We begin with the raw amino-acid sequence, 374 residues long: Alanine racemase (374 aa).

K44 serves as the catalytic Proton acceptor; specific for D-alanine. K44 carries the N6-(pyridoxal phosphate)lysine modification. Residue R139 participates in substrate binding. Y269 acts as the Proton acceptor; specific for L-alanine in catalysis. M317 lines the substrate pocket.

Belongs to the alanine racemase family. It depends on pyridoxal 5'-phosphate as a cofactor.

It carries out the reaction L-alanine = D-alanine. The protein operates within amino-acid biosynthesis; D-alanine biosynthesis; D-alanine from L-alanine: step 1/1. Functionally, catalyzes the interconversion of L-alanine and D-alanine. May also act on other amino acids. In Bordetella avium (strain 197N), this protein is Alanine racemase (alr).